We begin with the raw amino-acid sequence, 592 residues long: Beta-fructofuranosidase, insoluble isoenzyme 2 (592 aa).

The N-terminal stretch at 1 to 40 (MLIRCFHIKMALVTCFHSMLFLSAVVFIFSLDVNIRGVEA) is a signal peptide. Aspartate 75 is an active-site residue. 5 N-linked (GlcNAc...) asparagine glycosylation sites follow: asparagine 171, asparagine 195, asparagine 310, asparagine 347, and asparagine 568.

It belongs to the glycosyl hydrolase 32 family.

It localises to the secreted. It is found in the cell wall. The enzyme catalyses Hydrolysis of terminal non-reducing beta-D-fructofuranoside residues in beta-D-fructofuranosides.. In terms of biological role, may play an important role in phloem unloading and in stress response. This chain is Beta-fructofuranosidase, insoluble isoenzyme 2 (INV2), found in Daucus carota (Wild carrot).